The primary structure comprises 396 residues: 1-deoxy-D-xylulose 5-phosphate reductoisomerase (396 aa).

Residues Thr-13, Gly-14, Ser-15, Ile-16, and Asn-127 each contribute to the NADPH site. Lys-128 is a binding site for 1-deoxy-D-xylulose 5-phosphate. Glu-129 contacts NADPH. Asp-153 provides a ligand contact to Mn(2+). 1-deoxy-D-xylulose 5-phosphate is bound by residues Ser-154, Glu-155, Ser-184, and His-207. Glu-155 contacts Mn(2+). Gly-213 provides a ligand contact to NADPH. 1-deoxy-D-xylulose 5-phosphate is bound by residues Ser-220, Asn-225, Lys-226, and Glu-229. Glu-229 provides a ligand contact to Mn(2+).

It belongs to the DXR family. It depends on Mg(2+) as a cofactor. Mn(2+) is required as a cofactor.

The catalysed reaction is 2-C-methyl-D-erythritol 4-phosphate + NADP(+) = 1-deoxy-D-xylulose 5-phosphate + NADPH + H(+). It participates in isoprenoid biosynthesis; isopentenyl diphosphate biosynthesis via DXP pathway; isopentenyl diphosphate from 1-deoxy-D-xylulose 5-phosphate: step 1/6. Its function is as follows. Catalyzes the NADPH-dependent rearrangement and reduction of 1-deoxy-D-xylulose-5-phosphate (DXP) to 2-C-methyl-D-erythritol 4-phosphate (MEP). The protein is 1-deoxy-D-xylulose 5-phosphate reductoisomerase of Pseudomonas syringae pv. syringae (strain B728a).